The following is a 326-amino-acid chain: Adenine deaminase (326 aa).

Zn(2+) is bound by residues His14, His16, and His194. The Proton donor role is filled by Glu197. Position 275 (Asp275) interacts with Zn(2+). Asp276 provides a ligand contact to substrate.

Belongs to the metallo-dependent hydrolases superfamily. Adenosine and AMP deaminases family. Adenine deaminase type 2 subfamily. Zn(2+) serves as cofactor.

It catalyses the reaction adenine + H2O + H(+) = hypoxanthine + NH4(+). Catalyzes the hydrolytic deamination of adenine to hypoxanthine. Plays an important role in the purine salvage pathway and in nitrogen catabolism. This is Adenine deaminase from Crocosphaera subtropica (strain ATCC 51142 / BH68) (Cyanothece sp. (strain ATCC 51142)).